A 495-amino-acid chain; its full sequence is Dipeptide and tripeptide permease A (495 aa).

Over M1–S20 the chain is Cytoplasmic. The chain crosses the membrane as a helical span at residues I21 to V41. The Periplasmic portion of the chain corresponds to K42–S51. Residues F52–L72 traverse the membrane as a helical segment. Over G73–R81 the chain is Cytoplasmic. 2 helical membrane passes run T82–E102 and H103–A123. Topologically, residues N124–T145 are periplasmic. A helical transmembrane segment spans residues M146–A166. Over D167 to Y171 the chain is Cytoplasmic. The chain crosses the membrane as a helical span at residues A172–M192. Residues Q193–R209 lie on the Periplasmic side of the membrane. The helical transmembrane segment at L210–L230 threads the bilayer. The Cytoplasmic segment spans residues L231–K232. The chain crosses the membrane as a helical span at residues H233–V253. Residues K254 to K266 lie on the Periplasmic side of the membrane. Residues M267–M287 traverse the membrane as a helical segment. The Cytoplasmic portion of the chain corresponds to P288 to Q312. The helical transmembrane segment at F313–N333 threads the bilayer. Residues K334 to K344 are Periplasmic-facing. A helical membrane pass occupies residues F345 to Y365. At A366–N375 the chain is on the cytoplasmic side. Residues W376 to L396 traverse the membrane as a helical segment. Topologically, residues A397 to G409 are periplasmic. The chain crosses the membrane as a helical span at residues F410–A430. At G431 to R451 the chain is on the cytoplasmic side. A helical transmembrane segment spans residues V452–P472. The Periplasmic segment spans residues W473–R495.

Belongs to the major facilitator superfamily. Proton-dependent oligopeptide transporter (POT/PTR) (TC 2.A.17) family. DtpA subfamily.

It is found in the cell inner membrane. Functionally, proton-dependent permease that transports di- and tripeptides. This Chromobacterium violaceum (strain ATCC 12472 / DSM 30191 / JCM 1249 / CCUG 213 / NBRC 12614 / NCIMB 9131 / NCTC 9757 / MK) protein is Dipeptide and tripeptide permease A.